The chain runs to 325 residues: Diadenosine 5',5'''-P1,P4-tetraphosphate phosphorylase 2 (325 aa).

Residues Lys53, 92-93 (NK), Asn148, and 154-157 (GSSQ) each bind substrate. The active-site Nucleophile is His161. Substrate-binding positions include Gln163, 277–279 (NST), Met284, and Lys288.

Belongs to the ATP adenylyltransferase family. Monomer. A divalent metal cation is required as a cofactor.

Its subcellular location is the cytoplasm. The protein resides in the nucleus. The enzyme catalyses ADP + ATP + H(+) = P(1),P(4)-bis(5'-adenosyl) tetraphosphate + phosphate. It carries out the reaction sulfate + ADP + H(+) = adenosine 5'-phosphosulfate + phosphate. Its function is as follows. Ap4A phosphorylase catalyzes the phosphorolytic degradation of bis(5'-adenosyl) tetraphosphate (Ap4A) into ADP and ATP. Can also use other Np4N' nucleotides (where N and N' stand for A,C,G or U) as substrates, but prefers A-containing substrates. Cannot catalyze the reverse reaction. Additionally, this enzyme can also catalyze the phosphorolytic degradation of adenosine 5'-phosphosulfate (AMPS) into ADP and sulfate, the reversible exchange reaction between inorganic phosphate and the beta-phosphate of a nucleoside diphosphate (NDP), and the synthesis of Ap4A from AMPS plus ATP. This Saccharomyces cerevisiae (strain ATCC 204508 / S288c) (Baker's yeast) protein is Diadenosine 5',5'''-P1,P4-tetraphosphate phosphorylase 2.